The following is a 206-amino-acid chain: Guanylate kinase (206 aa).

The Guanylate kinase-like domain maps to 3 to 183 (GNLYILSAPS…ALTELKSILT (181 aa)). 10–17 (APSGAGKS) contacts ATP.

The protein belongs to the guanylate kinase family.

It localises to the cytoplasm. The catalysed reaction is GMP + ATP = GDP + ADP. Functionally, essential for recycling GMP and indirectly, cGMP. This is Guanylate kinase from Haemophilus ducreyi (strain 35000HP / ATCC 700724).